Reading from the N-terminus, the 500-residue chain is Glycerol kinase (500 aa).

An ADP-binding site is contributed by threonine 13. Residues threonine 13, threonine 14, and serine 15 each contribute to the ATP site. Threonine 13 contacts sn-glycerol 3-phosphate. Arginine 17 is a binding site for ADP. Sn-glycerol 3-phosphate contacts are provided by arginine 83, glutamate 84, tyrosine 135, and aspartate 245. 5 residues coordinate glycerol: arginine 83, glutamate 84, tyrosine 135, aspartate 245, and glutamine 246. Threonine 267 and glycine 310 together coordinate ADP. Residues threonine 267, glycine 310, glutamine 314, and glycine 411 each coordinate ATP. Residues glycine 411 and asparagine 415 each contribute to the ADP site.

This sequence belongs to the FGGY kinase family. In terms of assembly, homotetramer and homodimer (in equilibrium).

It carries out the reaction glycerol + ATP = sn-glycerol 3-phosphate + ADP + H(+). It participates in polyol metabolism; glycerol degradation via glycerol kinase pathway; sn-glycerol 3-phosphate from glycerol: step 1/1. With respect to regulation, activated by phosphorylation and inhibited by fructose 1,6-bisphosphate (FBP). In terms of biological role, key enzyme in the regulation of glycerol uptake and metabolism. Catalyzes the phosphorylation of glycerol to yield sn-glycerol 3-phosphate. This Lactobacillus acidophilus (strain ATCC 700396 / NCK56 / N2 / NCFM) protein is Glycerol kinase.